The chain runs to 119 residues: Large ribosomal subunit protein uL18 (119 aa).

The protein belongs to the universal ribosomal protein uL18 family. In terms of assembly, part of the 50S ribosomal subunit; part of the 5S rRNA/L5/L18/L25 subcomplex. Contacts the 5S and 23S rRNAs.

In terms of biological role, this is one of the proteins that bind and probably mediate the attachment of the 5S RNA into the large ribosomal subunit, where it forms part of the central protuberance. The polypeptide is Large ribosomal subunit protein uL18 (Borreliella afzelii (strain PKo) (Borrelia afzelii)).